We begin with the raw amino-acid sequence, 96 residues long: UPF0235 protein YggU (96 aa).

This sequence belongs to the UPF0235 family.

This chain is UPF0235 protein YggU, found in Escherichia coli O157:H7.